The sequence spans 421 residues: Serine--tRNA ligase (421 aa).

229-231 (TSE) serves as a coordination point for L-serine. ATP is bound at residue 260-262 (RRE). Glutamate 283 lines the L-serine pocket. Residue 347 to 350 (EISS) coordinates ATP. Residue serine 381 coordinates L-serine.

Belongs to the class-II aminoacyl-tRNA synthetase family. Type-1 seryl-tRNA synthetase subfamily. In terms of assembly, homodimer. The tRNA molecule binds across the dimer.

The protein resides in the cytoplasm. It catalyses the reaction tRNA(Ser) + L-serine + ATP = L-seryl-tRNA(Ser) + AMP + diphosphate + H(+). The catalysed reaction is tRNA(Sec) + L-serine + ATP = L-seryl-tRNA(Sec) + AMP + diphosphate + H(+). It functions in the pathway aminoacyl-tRNA biosynthesis; selenocysteinyl-tRNA(Sec) biosynthesis; L-seryl-tRNA(Sec) from L-serine and tRNA(Sec): step 1/1. Catalyzes the attachment of serine to tRNA(Ser). Is also able to aminoacylate tRNA(Sec) with serine, to form the misacylated tRNA L-seryl-tRNA(Sec), which will be further converted into selenocysteinyl-tRNA(Sec). The chain is Serine--tRNA ligase from Fusobacterium nucleatum subsp. nucleatum (strain ATCC 25586 / DSM 15643 / BCRC 10681 / CIP 101130 / JCM 8532 / KCTC 2640 / LMG 13131 / VPI 4355).